The sequence spans 198 residues: Dephospho-CoA kinase (198 aa).

The region spanning 3-198 (VVGLTGGIGA…HRRYSLLAAA (196 aa)) is the DPCK domain. 11 to 16 (GAGKST) contacts ATP.

This sequence belongs to the CoaE family.

The protein localises to the cytoplasm. The catalysed reaction is 3'-dephospho-CoA + ATP = ADP + CoA + H(+). The protein operates within cofactor biosynthesis; coenzyme A biosynthesis; CoA from (R)-pantothenate: step 5/5. In terms of biological role, catalyzes the phosphorylation of the 3'-hydroxyl group of dephosphocoenzyme A to form coenzyme A. This is Dephospho-CoA kinase from Methylococcus capsulatus (strain ATCC 33009 / NCIMB 11132 / Bath).